The following is a 1058-amino-acid chain: Carbamoyl phosphate synthase large chain (1058 aa).

The tract at residues methionine 1 to glutamate 401 is carboxyphosphate synthetic domain. ATP-binding residues include arginine 129, arginine 169, glycine 175, glycine 176, arginine 208, isoleucine 210, glutamate 215, glycine 241, isoleucine 242, histidine 243, glutamine 284, and glutamate 298. In terms of domain architecture, ATP-grasp 1 spans lysine 133–valine 327. Mg(2+)-binding residues include glutamine 284, glutamate 298, and asparagine 300. Mn(2+) contacts are provided by glutamine 284, glutamate 298, and asparagine 300. Residues isoleucine 402–serine 546 form an oligomerization domain region. The segment at valine 547–asparagine 929 is carbamoyl phosphate synthetic domain. Positions glutamate 671–leucine 861 constitute an ATP-grasp 2 domain. Positions 707, 746, 748, 752, 777, 778, 779, 780, 820, and 832 each coordinate ATP. Positions 820, 832, and 834 each coordinate Mg(2+). The Mn(2+) site is built by glutamine 820, glutamate 832, and asparagine 834. In terms of domain architecture, MGS-like spans serine 930 to isoleucine 1058. Residues serine 930–isoleucine 1058 are allosteric domain.

This sequence belongs to the CarB family. As to quaternary structure, composed of two chains; the small (or glutamine) chain promotes the hydrolysis of glutamine to ammonia, which is used by the large (or ammonia) chain to synthesize carbamoyl phosphate. Tetramer of heterodimers (alpha,beta)4. Mg(2+) is required as a cofactor. It depends on Mn(2+) as a cofactor.

It catalyses the reaction hydrogencarbonate + L-glutamine + 2 ATP + H2O = carbamoyl phosphate + L-glutamate + 2 ADP + phosphate + 2 H(+). It carries out the reaction hydrogencarbonate + NH4(+) + 2 ATP = carbamoyl phosphate + 2 ADP + phosphate + 2 H(+). Its pathway is amino-acid biosynthesis; L-arginine biosynthesis; carbamoyl phosphate from bicarbonate: step 1/1. The protein operates within pyrimidine metabolism; UMP biosynthesis via de novo pathway; (S)-dihydroorotate from bicarbonate: step 1/3. Large subunit of the glutamine-dependent carbamoyl phosphate synthetase (CPSase). CPSase catalyzes the formation of carbamoyl phosphate from the ammonia moiety of glutamine, carbonate, and phosphate donated by ATP, constituting the first step of 2 biosynthetic pathways, one leading to arginine and/or urea and the other to pyrimidine nucleotides. The large subunit (synthetase) binds the substrates ammonia (free or transferred from glutamine from the small subunit), hydrogencarbonate and ATP and carries out an ATP-coupled ligase reaction, activating hydrogencarbonate by forming carboxy phosphate which reacts with ammonia to form carbamoyl phosphate. This chain is Carbamoyl phosphate synthase large chain, found in Streptococcus pyogenes serotype M18 (strain MGAS8232).